Here is a 342-residue protein sequence, read N- to C-terminus: MTETIKTDVLIVGAGPCGLFAVFELGLLDIKTHLVDILDKVGGQCAELYPEKPIYDIPGVPMITGHGLTEALMEQIKPFNPTIHLNEMIESVEKIGDPEFRVTTNAGTVFECKVLVVAAGGGSFQPKRPPVPGVEAYEGKSVHYAVRKMEEFRGKDIVIVGGGDSALDWTLNLNPICKSMTLVHRRDDFRGAPHSVEQMRQLVASGKLDLKIGQITELQGEDGQLSGATIKLNGNSIAQIKCDAMLPFFGLTMKLGPVANWGLQLENNLIPVDTGTFETNVPGIFAIGDINTYPGKLKLILSGFHEGALMAQKAVKYVYPDKRVVFQYTTSSTNLQKKLGVN.

Positions 17, 36, 44, 49, 89, 124, 289, and 330 each coordinate FAD.

This sequence belongs to the ferredoxin--NADP reductase type 2 family. In terms of assembly, homodimer. FAD is required as a cofactor.

It catalyses the reaction 2 reduced [2Fe-2S]-[ferredoxin] + NADP(+) + H(+) = 2 oxidized [2Fe-2S]-[ferredoxin] + NADPH. The polypeptide is Ferredoxin--NADP reductase (Rhodopseudomonas palustris (strain HaA2)).